Reading from the N-terminus, the 127-residue chain is Apolipoprotein C-IV (127 aa).

Residues Met1 to Cys27 form the signal peptide. Asn63 is a glycosylation site (N-linked (GlcNAc...) asparagine).

Belongs to the apolipoprotein C4 family. In terms of tissue distribution, expressed by the liver and secreted in plasma.

It is found in the secreted. In terms of biological role, may participate in lipoprotein metabolism. The protein is Apolipoprotein C-IV (APOC4) of Homo sapiens (Human).